A 641-amino-acid polypeptide reads, in one-letter code: Fructose-1,6-bisphosphatase class 3 (641 aa).

Belongs to the FBPase class 3 family. Requires Mn(2+) as cofactor.

It catalyses the reaction beta-D-fructose 1,6-bisphosphate + H2O = beta-D-fructose 6-phosphate + phosphate. Its pathway is carbohydrate biosynthesis; gluconeogenesis. This is Fructose-1,6-bisphosphatase class 3 from Bacillus velezensis (strain DSM 23117 / BGSC 10A6 / LMG 26770 / FZB42) (Bacillus amyloliquefaciens subsp. plantarum).